Reading from the N-terminus, the 806-residue chain is Acetyl-CoA decarbonylase/synthase complex subunit alpha 1 (806 aa).

Residues cysteine 73, cysteine 76, cysteine 77, cysteine 79, cysteine 84, and cysteine 94 each contribute to the [4Fe-4S] cluster site. Histidine 117 contacts CO. Residues histidine 250, cysteine 278, and cysteine 323 each coordinate [Ni-4Fe-4S] cluster. 2 4Fe-4S ferredoxin-type domains span residues 406–436 (SDEQ…IPEA) and 445–475 (FSYL…LSVI). Cysteine 417, cysteine 420, cysteine 423, cysteine 427, cysteine 455, cysteine 458, cysteine 461, and cysteine 465 together coordinate [4Fe-4S] cluster. Residues cysteine 523, cysteine 552, and cysteine 587 each contribute to the [Ni-4Fe-4S] cluster site.

It belongs to the Ni-containing carbon monoxide dehydrogenase family. Heterotetramer of two alpha and two epsilon subunits. The ACDS complex is made up of alpha, epsilon, beta, gamma and delta subunits with a probable stoichiometry of (alpha(2)epsilon(2))(4)-beta(8)-(gamma(1)delta(1))(8). [4Fe-4S] cluster is required as a cofactor. The cofactor is [Ni-4Fe-4S] cluster.

It carries out the reaction CO + 2 oxidized [2Fe-2S]-[ferredoxin] + H2O = 2 reduced [2Fe-2S]-[ferredoxin] + CO2 + 2 H(+). Its pathway is one-carbon metabolism; methanogenesis from acetate. Its function is as follows. Part of the ACDS complex that catalyzes the reversible cleavage of acetyl-CoA, allowing growth on acetate as sole source of carbon and energy. The alpha-epsilon subcomponent functions as a carbon monoxide dehydrogenase. The chain is Acetyl-CoA decarbonylase/synthase complex subunit alpha 1 from Methanosarcina mazei (strain ATCC BAA-159 / DSM 3647 / Goe1 / Go1 / JCM 11833 / OCM 88) (Methanosarcina frisia).